We begin with the raw amino-acid sequence, 134 residues long: MIIGIGSDLIDIRRVEKSIERFGERFTHRCFTEIERARSDKRANRAASYAKRFAAKEACSKALGTGIAQGVFWKDMGVVNLRSGKPTMLLSGGAALILESLLPAGHRPAIHLTITDDYPLAQAFVIIEALPESL.

Mg(2+) contacts are provided by Asp-8 and Glu-57.

This sequence belongs to the P-Pant transferase superfamily. AcpS family. Mg(2+) is required as a cofactor.

Its subcellular location is the cytoplasm. The catalysed reaction is apo-[ACP] + CoA = holo-[ACP] + adenosine 3',5'-bisphosphate + H(+). In terms of biological role, transfers the 4'-phosphopantetheine moiety from coenzyme A to a Ser of acyl-carrier-protein. This chain is Holo-[acyl-carrier-protein] synthase, found in Rhizobium johnstonii (strain DSM 114642 / LMG 32736 / 3841) (Rhizobium leguminosarum bv. viciae).